A 37-amino-acid polypeptide reads, in one-letter code: Kappa-actitoxin-Bgr1a (37 aa).

The region spanning 2–37 (CRDWFKETACRHAKSLGNCRTSQKYRANCAKTCELC) is the ShKT domain. Disulfide bonds link C2–C37, C11–C30, and C20–C34. Positions 25 to 26 (KY) are crucial for binding to potassium channels.

This sequence belongs to the sea anemone type 1 potassium channel toxin family. Type 1b subfamily.

Its subcellular location is the secreted. It is found in the nematocyst. Its function is as follows. Inhibits voltage-dependent potassium channels of the Kv1 family (Kv1.1/KCNA1 (Kd=6 nM), Kv1.2/KCNA2 (Kd=15 nM), Kv1.3/KCNA3 (Kd=10-39 nM), Kv1.6/KCNA6, and KCa3.1/KCNN4 (Kd=172 nM)). The sequence is that of Kappa-actitoxin-Bgr1a from Bunodosoma granuliferum (Red warty sea anemone).